A 231-amino-acid polypeptide reads, in one-letter code: 7-cyano-7-deazaguanine synthase (231 aa).

8 to 18 (FSGGQDSTTCL) serves as a coordination point for ATP. Residues C187, C196, C199, and C202 each coordinate Zn(2+).

The protein belongs to the QueC family. The cofactor is Zn(2+).

It catalyses the reaction 7-carboxy-7-deazaguanine + NH4(+) + ATP = 7-cyano-7-deazaguanine + ADP + phosphate + H2O + H(+). It participates in purine metabolism; 7-cyano-7-deazaguanine biosynthesis. Catalyzes the ATP-dependent conversion of 7-carboxy-7-deazaguanine (CDG) to 7-cyano-7-deazaguanine (preQ(0)). This Vibrio vulnificus (strain CMCP6) protein is 7-cyano-7-deazaguanine synthase.